A 429-amino-acid polypeptide reads, in one-letter code: Putative F-box/kelch-repeat protein At2g21680 (429 aa).

A disordered region spans residues 1–32; that stretch reads MVLISETSDDGSTGGDHQIKKPKKEEDRNKKL. Residues 17 to 29 are compositionally biased toward basic and acidic residues; the sequence is HQIKKPKKEEDRN. Residues 37-84 form the F-box domain; the sequence is QVSLPIPEELILRCFLLVRRCHHPSLSLVCRSFHSLMSKLYDDRLRLG. Kelch repeat units follow at residues 144–175, 176–221, 222–267, 269–313, and 315–359; these read DIYVIGGRVGEKLLEDVGVGYNKPISGGRRGE, TSIR…VIDG, KIYV…LTYA, MKEK…VVDN, and LFCI…DGYK.

The chain is Putative F-box/kelch-repeat protein At2g21680 from Arabidopsis thaliana (Mouse-ear cress).